Here is a 1671-residue protein sequence, read N- to C-terminus: Kinesin-like protein unc-104 (1671 aa).

One can recognise a Kinesin motor domain in the interval Ser-3–Ile-351. ATP is bound at residue Gly-97–Ser-104. Residues Asn-358–Glu-437 adopt a coiled-coil conformation. The segment at Asp-391–Thr-413 is disordered. The span at Lys-395–Thr-413 shows a compositional bias: polar residues. An FHA domain is found at Thr-500–Gly-566. A coiled-coil region spans residues Glu-577–Tyr-674. The segment at Asp-949–Glu-973 is disordered. Positions Val-1538–Ala-1636 constitute a PH domain.

Belongs to the TRAFAC class myosin-kinesin ATPase superfamily. Kinesin family. Unc-104 subfamily. As to quaternary structure, monomer.

Its subcellular location is the cytoplasm. It is found in the cytoskeleton. Required for presynaptic maturation, has a role in axonal transport of dense-core vesicles carrying synaptic vesicle precursors, components required for the morphological transformation of axonal growth cones to mature boutons. This is Kinesin-like protein unc-104 from Drosophila pseudoobscura pseudoobscura (Fruit fly).